A 758-amino-acid chain; its full sequence is Probable adenosylcobalamin-dependent ribonucleoside-triphosphate reductase (758 aa).

A disulfide bridge connects residues cysteine 194 and cysteine 459. Residues 233-256 (IIIKGQLPPPPPQQQPQQQQQQHG) are disordered. Catalysis depends on residues cysteine 448 and glutamate 450.

Belongs to the class II ribonucleoside-triphosphate reductase family. Monomer. The cofactor is adenosylcob(III)alamin.

It catalyses the reaction a 2'-deoxyribonucleoside 5'-triphosphate + [thioredoxin]-disulfide + H2O = a ribonucleoside 5'-triphosphate + [thioredoxin]-dithiol. This chain is Probable adenosylcobalamin-dependent ribonucleoside-triphosphate reductase (rtpR), found in Dictyostelium discoideum (Social amoeba).